The sequence spans 166 residues: NAD(P)H-quinone oxidoreductase subunit I, chloroplastic (166 aa).

4Fe-4S ferredoxin-type domains follow at residues 55–84 (GRIHFEFDKCIACEVCVRVCPIDLPVVDWK) and 95–124 (LNYSIDFGICIFCGNCVEYCPTNCLSMTEE). The [4Fe-4S] cluster site is built by Cys-64, Cys-67, Cys-70, Cys-74, Cys-104, Cys-107, Cys-110, and Cys-114.

It belongs to the complex I 23 kDa subunit family. As to quaternary structure, NDH is composed of at least 16 different subunits, 5 of which are encoded in the nucleus. [4Fe-4S] cluster serves as cofactor.

The protein resides in the plastid. Its subcellular location is the chloroplast thylakoid membrane. The catalysed reaction is a plastoquinone + NADH + (n+1) H(+)(in) = a plastoquinol + NAD(+) + n H(+)(out). It carries out the reaction a plastoquinone + NADPH + (n+1) H(+)(in) = a plastoquinol + NADP(+) + n H(+)(out). Functionally, NDH shuttles electrons from NAD(P)H:plastoquinone, via FMN and iron-sulfur (Fe-S) centers, to quinones in the photosynthetic chain and possibly in a chloroplast respiratory chain. The immediate electron acceptor for the enzyme in this species is believed to be plastoquinone. Couples the redox reaction to proton translocation, and thus conserves the redox energy in a proton gradient. The polypeptide is NAD(P)H-quinone oxidoreductase subunit I, chloroplastic (Oteiza scandens (Climbing oteiza)).